The sequence spans 498 residues: Putative BTB/POZ domain-containing protein L788 (498 aa).

A BTB domain is found at 28–99; it reads TDIILVLEDD…FYGQKIKSGN (72 aa).

This sequence belongs to the mimivirus BTB/WD family.

The sequence is that of Putative BTB/POZ domain-containing protein L788 from Acanthamoeba polyphaga (Amoeba).